A 369-amino-acid polypeptide reads, in one-letter code: Queuine tRNA-ribosyltransferase accessory subunit 2 (369 aa).

Residues 263–282 form a disordered region; the sequence is SSKLTEVEEENGNDSSNDQD. Zn(2+) contacts are provided by C308, C310, C313, and H339.

Belongs to the queuine tRNA-ribosyltransferase family. QTRT2 subfamily. Heterodimer of a catalytic subunit and an accessory subunit. The cofactor is Zn(2+).

It is found in the cytoplasm. In terms of biological role, non-catalytic subunit of the queuine tRNA-ribosyltransferase (TGT) that catalyzes the base-exchange of a guanine (G) residue with queuine (Q) at position 34 (anticodon wobble position) in tRNAs with GU(N) anticodons (tRNA-Asp, -Asn, -His and -Tyr), resulting in the hypermodified nucleoside queuosine (7-(((4,5-cis-dihydroxy-2-cyclopenten-1-yl)amino)methyl)-7-deazaguanosine). This Trichoplax adhaerens (Trichoplax reptans) protein is Queuine tRNA-ribosyltransferase accessory subunit 2.